The following is a 208-amino-acid chain: Troponin I, cardiac muscle (208 aa).

3 disordered regions span residues 1–37, 54–74, and 168–208; these read MAEEEEPKPPPLRRKSSANYRGYAVEPHAKRQSKISA, DLEREEQERAGEKQRHLGELC, and VRKD…GGQS. At Ala-2 the chain carries N-acetylalanine. The involved in binding TNC stretch occupies residues 28–73; sequence HAKRQSKISASRKLQLKTLLLQRAKRDLEREEQERAGEKQRHLGEL. Basic and acidic residues-rich tracts occupy residues 54–71 and 168–187; these read DLEREEQERAGEKQRHLG and VRKDEAEKESREVGDWRKNV.

It belongs to the troponin I family. Binds to actin and tropomyosin.

Its function is as follows. Troponin I is the inhibitory subunit of troponin, the thin filament regulatory complex which confers calcium-sensitivity to striated muscle actomyosin ATPase activity. In Coturnix japonica (Japanese quail), this protein is Troponin I, cardiac muscle (TNNI3).